We begin with the raw amino-acid sequence, 271 residues long: Potential ATP-binding protein (271 aa).

34 to 41 (GQPGVGKT) contributes to the ATP binding site.

This Staphylococcus aureus protein is Potential ATP-binding protein.